Here is a 264-residue protein sequence, read N- to C-terminus: ATP synthase subunit a (264 aa).

The next 6 membrane-spanning stretches (helical) occupy residues 29-49 (TWHI…LWIF), 87-107 (NALI…MNFM), 134-154 (DVNI…YYSI), 177-197 (IPVN…SLAL), 208-228 (LIFI…SLGV), and 235-255 (LIFH…LTIV).

It belongs to the ATPase A chain family. In terms of assembly, F-type ATPases have 2 components, CF(1) - the catalytic core - and CF(0) - the membrane proton channel. CF(1) has five subunits: alpha(3), beta(3), gamma(1), delta(1), epsilon(1). CF(0) has three main subunits: a(1), b(2) and c(9-12). The alpha and beta chains form an alternating ring which encloses part of the gamma chain. CF(1) is attached to CF(0) by a central stalk formed by the gamma and epsilon chains, while a peripheral stalk is formed by the delta and b chains.

Its subcellular location is the cell inner membrane. In terms of biological role, key component of the proton channel; it plays a direct role in the translocation of protons across the membrane. The protein is ATP synthase subunit a of Shewanella sp. (strain MR-4).